The sequence spans 229 residues: Protein-lysine N-methyltransferase EFM4 (229 aa).

It belongs to the class I-like SAM-binding methyltransferase superfamily. EFM4 family.

Its subcellular location is the cytoplasm. The enzyme catalyses L-lysyl-[protein] + S-adenosyl-L-methionine = N(6)-methyl-L-lysyl-[protein] + S-adenosyl-L-homocysteine + H(+). It carries out the reaction N(6)-methyl-L-lysyl-[protein] + S-adenosyl-L-methionine = N(6),N(6)-dimethyl-L-lysyl-[protein] + S-adenosyl-L-homocysteine + H(+). Functionally, S-adenosyl-L-methionine-dependent protein-lysine N-methyltransferase that mono- and dimethylates elongation factor 1-alpha (TEF1 and TEF2) at 'Lys-316'. May play a role in intracellular transport. The protein is Protein-lysine N-methyltransferase EFM4 of Saccharomyces cerevisiae (strain ATCC 204508 / S288c) (Baker's yeast).